The chain runs to 511 residues: Peroxisomal N(1)-acetyl-spermine/spermidine oxidase (511 aa).

An N-acetylmethionine modification is found at Met1. FAD is bound by residues Ala24, Glu45, Arg53, and 69–70 (HW). Substrate contacts are provided by His72 and Val194. FAD is bound at residue Val247. Asn320 contributes to the substrate binding site. Residues Glu472 and 481–482 (TT) contribute to the FAD site. The Microbody targeting signal signature appears at 509–511 (PRL).

It belongs to the flavin monoamine oxidase family. In terms of assembly, monomer. Requires FAD as cofactor. Widely expressed. Not detected in spleen. Expressed at lower level in neoplastic tissues.

The protein resides in the peroxisome. The protein localises to the cytoplasm. It carries out the reaction N(1)-acetylspermine + O2 + H2O = 3-acetamidopropanal + spermidine + H2O2. It catalyses the reaction N(1)-acetylspermidine + O2 + H2O = 3-acetamidopropanal + putrescine + H2O2. The enzyme catalyses N(1),N(12)-diacetylspermine + O2 + H2O = 3-acetamidopropanal + N(1)-acetylspermidine + H2O2. Its pathway is amine and polyamine metabolism; spermine metabolism. In terms of biological role, flavoenzyme which catalyzes the oxidation of N(1)-acetylspermine to spermidine and is thus involved in the polyamine back-conversion. Can also oxidize N(1)-acetylspermidine to putrescine. Substrate specificity: N(1)-acetylspermine = N(1)-acetylspermidine &gt; N(1),N(12)-diacylspermine &gt;&gt; spermine. Does not oxidize spermidine. Plays an important role in the regulation of polyamine intracellular concentration and has the potential to act as a determinant of cellular sensitivity to the antitumor polyamine analogs. The chain is Peroxisomal N(1)-acetyl-spermine/spermidine oxidase (PAOX) from Homo sapiens (Human).